The primary structure comprises 568 residues: Glucose-6-phosphate isomerase, cytosolic 1 (568 aa).

The active-site Proton donor is Glu-360. Catalysis depends on residues His-391 and Lys-516.

The protein belongs to the GPI family. Homodimer.

Its subcellular location is the cytoplasm. The enzyme catalyses alpha-D-glucose 6-phosphate = beta-D-fructose 6-phosphate. The protein operates within carbohydrate degradation; glycolysis; D-glyceraldehyde 3-phosphate and glycerone phosphate from D-glucose: step 2/4. In Clarkia mildrediae, this protein is Glucose-6-phosphate isomerase, cytosolic 1 (PGIC1).